The sequence spans 220 residues: 7-cyano-7-deazaguanine synthase (220 aa).

ATP is bound at residue 10-20; that stretch reads FSGGQDSTTCL. Positions 186, 195, 198, and 201 each coordinate Zn(2+).

It belongs to the QueC family. As to quaternary structure, homodimer. Requires Zn(2+) as cofactor.

It catalyses the reaction 7-carboxy-7-deazaguanine + NH4(+) + ATP = 7-cyano-7-deazaguanine + ADP + phosphate + H2O + H(+). It functions in the pathway purine metabolism; 7-cyano-7-deazaguanine biosynthesis. Its function is as follows. Catalyzes the ATP-dependent conversion of 7-carboxy-7-deazaguanine (CDG) to 7-cyano-7-deazaguanine (preQ(0)). This Bacillus cereus (strain ATCC 14579 / DSM 31 / CCUG 7414 / JCM 2152 / NBRC 15305 / NCIMB 9373 / NCTC 2599 / NRRL B-3711) protein is 7-cyano-7-deazaguanine synthase.